The primary structure comprises 195 residues: Thymidine kinase (195 aa).

ATP contacts are provided by residues 9 to 16 (ATMNAGKS) and 89 to 92 (DEAQ). The Proton acceptor role is filled by Glu-90. The Zn(2+) site is built by Cys-147, Cys-149, Cys-184, and His-187.

Belongs to the thymidine kinase family. In terms of assembly, homotetramer.

It is found in the cytoplasm. It catalyses the reaction thymidine + ATP = dTMP + ADP + H(+). This is Thymidine kinase from Rhizobium meliloti (strain 1021) (Ensifer meliloti).